Here is a 121-residue protein sequence, read N- to C-terminus: Large ribosomal subunit protein uL14 (121 aa).

This sequence belongs to the universal ribosomal protein uL14 family. In terms of assembly, part of the 50S ribosomal subunit. Forms a cluster with proteins L3 and L19. In the 70S ribosome, L14 and L19 interact and together make contacts with the 16S rRNA in bridges B5 and B8.

In terms of biological role, binds to 23S rRNA. Forms part of two intersubunit bridges in the 70S ribosome. The sequence is that of Large ribosomal subunit protein uL14 from Legionella pneumophila (strain Corby).